Here is a 942-residue protein sequence, read N- to C-terminus: Protein translocase subunit SecA (942 aa).

Residues glutamine 90, 108 to 112, and aspartate 509 each bind ATP; that span reads GEGKT.

The protein belongs to the SecA family. In terms of assembly, monomer and homodimer. Part of the essential Sec protein translocation apparatus which comprises SecA, SecYEG and auxiliary proteins SecDF. Other proteins may also be involved.

It localises to the cell inner membrane. It is found in the cellular thylakoid membrane. Its subcellular location is the cytoplasm. It catalyses the reaction ATP + H2O + cellular proteinSide 1 = ADP + phosphate + cellular proteinSide 2.. Functionally, part of the Sec protein translocase complex. Interacts with the SecYEG preprotein conducting channel. Has a central role in coupling the hydrolysis of ATP to the transfer of proteins into and across the cell membrane, serving as an ATP-driven molecular motor driving the stepwise translocation of polypeptide chains across the membrane. In terms of biological role, probably participates in protein translocation into and across both the cytoplasmic and thylakoid membranes in cyanobacterial cells. In Prochlorococcus marinus (strain NATL2A), this protein is Protein translocase subunit SecA.